Reading from the N-terminus, the 583-residue chain is RuBisCO large subunit-binding protein subunit alpha, chloroplastic (583 aa).

Residues 1 to 14 are compositionally biased toward polar residues; it reads MATANALSSPSVLC. The segment at 1–35 is disordered; that stretch reads MATANALSSPSVLCSSRQGKLSGGSQQKGQRVSYR. A chloroplast-targeting transit peptide spans 1 to 45; the sequence is MATANALSSPSVLCSSRQGKLSGGSQQKGQRVSYRKANRRFSLRA. Residues 15–31 show a composition bias toward low complexity; the sequence is SSRQGKLSGGSQQKGQR. Serine 89 bears the Phosphoserine mark.

The protein belongs to the chaperonin (HSP60) family. As to quaternary structure, oligomer of probably six alpha and six beta subunits.

The protein localises to the plastid. It localises to the chloroplast. In terms of biological role, this protein binds RuBisCO small and large subunits and is implicated in the assembly of the enzyme oligomer. This Brassica napus (Rape) protein is RuBisCO large subunit-binding protein subunit alpha, chloroplastic.